The following is a 609-amino-acid chain: UvrABC system protein C (609 aa).

A GIY-YIG domain is found at 16–94 (SSAGVYRMYD…IKQYMPKYNV (79 aa)). One can recognise a UVR domain in the interval 203–238 (KQVISELVAKMEEAAEQQAYEQAARFRDQIMALRRV).

The protein belongs to the UvrC family. As to quaternary structure, interacts with UvrB in an incision complex.

It localises to the cytoplasm. Its function is as follows. The UvrABC repair system catalyzes the recognition and processing of DNA lesions. UvrC both incises the 5' and 3' sides of the lesion. The N-terminal half is responsible for the 3' incision and the C-terminal half is responsible for the 5' incision. The protein is UvrABC system protein C of Shewanella sp. (strain MR-4).